We begin with the raw amino-acid sequence, 372 residues long: uncharacterized protein (372 aa).

Residue 4-18 (YIIVGAGILGASTAY) coordinates FAD.

The protein belongs to the DadA oxidoreductase family. It depends on FAD as a cofactor.

This is an uncharacterized protein from Bacillus subtilis (strain 168).